An 867-amino-acid chain; its full sequence is Protein translocase subunit SecA (867 aa).

Residues glutamine 85, 103–107, and aspartate 491 each bind ATP; that span reads GEGKT.

Belongs to the SecA family. As to quaternary structure, monomer and homodimer. Part of the essential Sec protein translocation apparatus which comprises SecA, SecYEG and auxiliary proteins SecDF. Other proteins may also be involved.

It is found in the cell membrane. It localises to the cytoplasm. It catalyses the reaction ATP + H2O + cellular proteinSide 1 = ADP + phosphate + cellular proteinSide 2.. In terms of biological role, part of the Sec protein translocase complex. Interacts with the SecYEG preprotein conducting channel. Has a central role in coupling the hydrolysis of ATP to the transfer of proteins into and across the cell membrane, serving as an ATP-driven molecular motor driving the stepwise translocation of polypeptide chains across the membrane. The protein is Protein translocase subunit SecA of Mycoplasmopsis pulmonis (strain UAB CTIP) (Mycoplasma pulmonis).